A 377-amino-acid polypeptide reads, in one-letter code: NADH dehydrogenase [ubiquinone] 1 alpha subcomplex subunit 9, mitochondrial (377 aa).

The transit peptide at 1–35 (MAAAVRFQVVRALPMSRPAISAAATSVFCSSSHRQ) directs the protein to the mitochondrion. Lysine 175 carries the N6-succinyllysine modification. N6-acetyllysine occurs at positions 189 and 370.

Belongs to the complex I NDUFA9 subunit family. As to quaternary structure, complex I is composed of 45 different subunits. This a component of the hydrophobic protein fraction. Interacts with BLOC1S1. Interacts with SLC2A4. Interacts with CLOCK. Interacts with RAB5IF. FAD serves as cofactor. Post-translationally, acetylated on lysine residues. BLOC1S1 is required for acetylation. Acetylated by CLOCK in a circadian manner. As to expression, expressed by the principal cells of the epididymis. Detected in flagella of epididymal sperm (at protein level).

It localises to the mitochondrion matrix. In terms of biological role, accessory subunit of the mitochondrial membrane respiratory chain NADH dehydrogenase (Complex I), that is believed not to be involved in catalysis. Complex I functions in the transfer of electrons from NADH to the respiratory chain. The immediate electron acceptor for the enzyme is believed to be ubiquinone. The chain is NADH dehydrogenase [ubiquinone] 1 alpha subcomplex subunit 9, mitochondrial from Rattus norvegicus (Rat).